We begin with the raw amino-acid sequence, 86 residues long: Large ribosomal subunit protein bL31B (86 aa).

It belongs to the bacterial ribosomal protein bL31 family. Type B subfamily. In terms of assembly, part of the 50S ribosomal subunit.

This is Large ribosomal subunit protein bL31B from Salmonella agona (strain SL483).